We begin with the raw amino-acid sequence, 1490 residues long: Leucine-rich repeat-containing protein 7 (1490 aa).

17 LRR repeats span residues 23 to 44 (IISV…VFNF), 47 to 68 (TLEE…LFNC), 70 to 91 (ALRK…IASL), 93 to 114 (NLKE…IKCC), 116 to 137 (CLTI…FTQL), 139 to 161 (NLTQ…GRLV), 162 to 183 (KLRI…MHKL), 185 to 206 (QLER…LDQI), 208 to 229 (NLRE…IGKL), 231 to 253 (MLVY…SGCE), 254 to 275 (ALED…IGLL), 277 to 298 (KLTT…IGNL), 300 to 321 (LLEE…IGYL), 323 to 344 (SLRT…IGSC), 346 to 367 (NVTV…IGQM), 369 to 391 (RLRV…TKLK), and 392 to 413 (ELAA…QTEA). 3 positions are modified to phosphoserine: Ser439, Ser441, and Ser443. Residues 663–676 (KKESTDESEVDKTH) show a composition bias toward basic and acidic residues. 3 disordered regions span residues 663 to 709 (KKES…VGSL), 775 to 808 (DNTG…HGRR), and 822 to 899 (ELEQ…YHDP). A compositionally biased stretch (polar residues) spans 677–686 (CLNNSVSSGT). A compositionally biased stretch (low complexity) spans 687 to 700 (YSDYSPSQASSASS). The span at 787–799 (ENANNNPLLSSKA) shows a compositional bias: polar residues. Thr831 bears the Phosphothreonine mark. Ser850 bears the Phosphoserine mark. Positions 859–871 (PSKLETTPTTSPL) are enriched in low complexity. Thr865 is subject to Phosphothreonine. Position 869 is a phosphoserine (Ser869). The segment covering 872–882 (PERKDHMKEPT) has biased composition (basic and acidic residues). A phosphoserine mark is found at Ser947, Ser949, and Ser1118. The residue at position 1149 (Arg1149) is an Omega-N-methylarginine. Polar residues predominate over residues 1194–1217 (LTQRRPLSARSYSTESYGASQTRP). Residues 1194 to 1218 (LTQRRPLSARSYSTESYGASQTRPV) form a disordered region. Ser1233 carries the post-translational modification Phosphoserine. Disordered stretches follow at residues 1238–1265 (GNYG…SCGK) and 1282–1312 (RLDR…PYPL). Basic and acidic residues predominate over residues 1243 to 1263 (KTSDNSDIKTRPTPVKGEESC). The span at 1286–1307 (TPSQQSNILDNGQEDVSPSGQW) shows a compositional bias: polar residues. Phosphoserine occurs at positions 1288 and 1392. In terms of domain architecture, PDZ spans 1398 to 1488 (EQFCVRIEKN…TVDLVIQREL (91 aa)).

Belongs to the LAP (LRR and PDZ) protein family. In terms of assembly, interacts with CNKSR2 and DLG4. Interacts with CTNND2/Catenin delta-2. Forms a complex with N-cadherin through CTNND2. Interacts with CAMK2A. Post-translationally, O-glycosylated and phosphorylated. As to expression, brain-specific. Highly concentrated at synapses.

The protein resides in the cytoplasm. The protein localises to the postsynaptic density. Required for normal synaptic spine architecture and function. Necessary for DISC1 and GRM5 localization to postsynaptic density complexes and for both N-methyl D-aspartate receptor-dependent and metabotropic glutamate receptor-dependent long term depression. This chain is Leucine-rich repeat-containing protein 7 (Lrrc7), found in Rattus norvegicus (Rat).